The sequence spans 301 residues: Olfactory receptor 10AG1 (301 aa).

The Extracellular portion of the chain corresponds to 1-16 (MEFVLLGFSDIPNLHW). The helical transmembrane segment at 17–37 (MLFSIFLLMYLMILMCNGIII) threads the bilayer. Residues 38-45 (LLIKIHPA) are Cytoplasmic-facing. A helical transmembrane segment spans residues 46–66 (LQTPMYFFLSNFSLLEICYVT). The Extracellular segment spans residues 67-90 (IIIPRMLMDIWTQKGNISLFACAT). N82 carries an N-linked (GlcNAc...) asparagine glycan. Cysteines 88 and 180 form a disulfide. Residues 91-111 (QMCFFLMLGGTECLLLTVMAY) traverse the membrane as a helical segment. Residues 112-130 (DRYVAICKPLQYPLVMNHK) lie on the Cytoplasmic side of the membrane. A helical transmembrane segment spans residues 131 to 151 (VCIQLIIASWTITIPVVIGET). The Extracellular portion of the chain corresponds to 152-188 (CQIFLLPFCGTNTINHFFCDIPPILKLACGNIFVNEI). A helical membrane pass occupies residues 189 to 208 (TVHVVAVVFITVPFLLIVVS). The Cytoplasmic portion of the chain corresponds to 209–228 (YGKIISNILKLSSARGKAKA). Residues 229–249 (FSTCSSHLIVVILFFGAGTIT) traverse the membrane as a helical segment. At 250 to 262 (YLQPKPHQFQRMG) the chain is on the extracellular side. A helical transmembrane segment spans residues 263–283 (KLISLFYTILIPTLNPIIYTL). Residues 284 to 301 (RNKDIMVALRKLLAKLLT) are Cytoplasmic-facing.

Belongs to the G-protein coupled receptor 1 family.

It is found in the cell membrane. Its function is as follows. Odorant receptor. This is Olfactory receptor 10AG1 (OR10AG1) from Homo sapiens (Human).